An 845-amino-acid polypeptide reads, in one-letter code: Beta-mannosidase B (845 aa).

Residues 1–20 are disordered; the sequence is MSKLQQFPLSKGWSFRDSED. The N-linked (GlcNAc...) asparagine glycan is linked to N252. The active-site Proton donor is E432. N-linked (GlcNAc...) asparagine glycosylation is found at N717 and N723.

The protein belongs to the glycosyl hydrolase 2 family. Beta-mannosidase B subfamily.

The enzyme catalyses Hydrolysis of terminal, non-reducing beta-D-mannose residues in beta-D-mannosides.. It functions in the pathway glycan metabolism; N-glycan degradation. In terms of biological role, exoglycosidase that cleaves the single beta-linked mannose residue from the non-reducing end of beta-mannosidic oligosaccharides of various complexity and length. Prefers mannobiose over mannotriose and has no activity against polymeric mannan. Is also severely restricted by galactosyl substitutions at the +1 subsite. The polypeptide is Beta-mannosidase B (mndB) (Neosartorya fischeri (strain ATCC 1020 / DSM 3700 / CBS 544.65 / FGSC A1164 / JCM 1740 / NRRL 181 / WB 181) (Aspergillus fischerianus)).